We begin with the raw amino-acid sequence, 38 residues long: Large ribosomal subunit protein bL36 (38 aa).

It belongs to the bacterial ribosomal protein bL36 family.

The chain is Large ribosomal subunit protein bL36 from Mycoplasma mobile (strain ATCC 43663 / 163K / NCTC 11711) (Mesomycoplasma mobile).